A 1026-amino-acid polypeptide reads, in one-letter code: Probable DNA-directed RNA polymerase II subunit RPB1 homolog (1026 aa).

Cys62, Cys65, Cys72, His75, Cys102, Cys105, and Cys142 together coordinate Zn(2+). Positions 588, 590, and 592 each coordinate Mg(2+).

The protein belongs to the RNA polymerase beta' chain family.

It catalyses the reaction RNA(n) + a ribonucleoside 5'-triphosphate = RNA(n+1) + diphosphate. In terms of biological role, component of the DNA-dependent RNA polymerase that catalyzes the transcription of DNA into RNA using the four ribonucleoside triphosphates as substrates. Largest and catalytic component of RNA polymerase II which synthesizes mRNA precursors and many functional non-coding RNAs. Forms the polymerase active center together with the second largest subunit. The protein is Probable DNA-directed RNA polymerase II subunit RPB1 homolog of Acheta domesticus (House cricket).